A 379-amino-acid chain; its full sequence is Pectin lyase B (379 aa).

Residues 1 to 19 form the signal peptide; sequence MRLHAPILSLLAAAASTSA. Intrachain disulfides connect Cys82–Cys101 and Cys91–Cys225. The N-linked (GlcNAc...) asparagine glycan is linked to Asn128. Arg255 is a catalytic residue. Cysteines 322 and 330 form a disulfide.

It belongs to the polysaccharide lyase 1 family.

The protein resides in the secreted. It catalyses the reaction Eliminative cleavage of (1-&gt;4)-alpha-D-galacturonan methyl ester to give oligosaccharides with 4-deoxy-6-O-methyl-alpha-D-galact-4-enuronosyl groups at their non-reducing ends.. Pectinolytic enzymes consist of four classes of enzymes: pectin lyase, polygalacturonase, pectin methylesterase and rhamnogalacturonase. Among pectinolytic enzymes, pectin lyase is the most important in depolymerization of pectin, since it cleaves internal glycosidic bonds of highly methylated pectins. The chain is Pectin lyase B (pelB) from Emericella nidulans (strain FGSC A4 / ATCC 38163 / CBS 112.46 / NRRL 194 / M139) (Aspergillus nidulans).